Reading from the N-terminus, the 328-residue chain is Phenylalanine--tRNA ligase alpha subunit (328 aa).

E253 provides a ligand contact to Mg(2+).

The protein belongs to the class-II aminoacyl-tRNA synthetase family. Phe-tRNA synthetase alpha subunit type 1 subfamily. In terms of assembly, tetramer of two alpha and two beta subunits. The cofactor is Mg(2+).

The protein localises to the cytoplasm. It carries out the reaction tRNA(Phe) + L-phenylalanine + ATP = L-phenylalanyl-tRNA(Phe) + AMP + diphosphate + H(+). The polypeptide is Phenylalanine--tRNA ligase alpha subunit (Actinobacillus pleuropneumoniae serotype 5b (strain L20)).